The primary structure comprises 1032 residues: Protein transport protein Sec24D (1032 aa).

The interval 1 to 260 (MSQQGYVATP…GPPQPQKKLD (260 aa)) is disordered. Positions 102-133 (PSAQSSYPGPISTSSVTQLGSQLSAMQINSYG) are enriched in polar residues. The segment covering 198-212 (GPPPPNAQYQPPPLP) has biased composition (pro residues). Ser-266 bears the Phosphoserine mark. Residues Cys-363, Cys-366, Cys-385, and Cys-388 each coordinate Zn(2+). The tract at residues 363-388 (CNRCKAYMCPFMQFIEGGRRYQCGFC) is zinc finger-like. The stretch at 901 to 974 (MLPAAVRCSE…PYSQQLRMIM (74 aa)) is one Gelsolin-like repeat.

It belongs to the SEC23/SEC24 family. SEC24 subfamily. COPII is composed of at least five proteins: the Sec23/24 complex, the Sec13/31 complex and Sar1. Interacts with TMED2 and TMED10. Interacts with CNIH4. Interacts with GOSR2 (via IxM motif) and STX5 (via IxM motif); recruits GOSR2 and STX5 into COPII-coated vesicles. Interacts with KCNA3; this interaction is reduced in the presence of KCNE4. In terms of tissue distribution, ubiquitously expressed, with higher amounts in placenta, pancreas, heart and liver.

The protein localises to the cytoplasmic vesicle. It localises to the COPII-coated vesicle membrane. Its subcellular location is the endoplasmic reticulum membrane. The protein resides in the cytoplasm. It is found in the cytosol. Functionally, component of the coat protein complex II (COPII) which promotes the formation of transport vesicles from the endoplasmic reticulum (ER). The coat has two main functions, the physical deformation of the endoplasmic reticulum membrane into vesicles and the selection of cargo molecules for their transport to the Golgi complex. Plays a central role in cargo selection within the COPII complex and together with SEC24C may have a different specificity compared to SEC24A and SEC24B. May more specifically package GPI-anchored proteins through the cargo receptor TMED10. May also be specific for IxM motif-containing cargos like the SNAREs GOSR2 and STX5. The polypeptide is Protein transport protein Sec24D (Homo sapiens (Human)).